The sequence spans 581 residues: Proline--tRNA ligase (581 aa).

It belongs to the class-II aminoacyl-tRNA synthetase family. ProS type 1 subfamily. In terms of assembly, homodimer.

The protein resides in the cytoplasm. The enzyme catalyses tRNA(Pro) + L-proline + ATP = L-prolyl-tRNA(Pro) + AMP + diphosphate. Catalyzes the attachment of proline to tRNA(Pro) in a two-step reaction: proline is first activated by ATP to form Pro-AMP and then transferred to the acceptor end of tRNA(Pro). As ProRS can inadvertently accommodate and process non-cognate amino acids such as alanine and cysteine, to avoid such errors it has two additional distinct editing activities against alanine. One activity is designated as 'pretransfer' editing and involves the tRNA(Pro)-independent hydrolysis of activated Ala-AMP. The other activity is designated 'posttransfer' editing and involves deacylation of mischarged Ala-tRNA(Pro). The misacylated Cys-tRNA(Pro) is not edited by ProRS. This chain is Proline--tRNA ligase, found in Acidovorax ebreus (strain TPSY) (Diaphorobacter sp. (strain TPSY)).